We begin with the raw amino-acid sequence, 231 residues long: METNVEKNSGTATEKPSLFGVITSPSVQFERIRERPAVWGPLLIVAAIIIVGAVLQSLGTDYSELLKSQDTQGLSAEQMETVATITKFGGMAGAIIGGIAALFIAPLIYWLCVKVSGGVTTYKKMLSLSLFVSLISSLGLLVNGIVAFTTDVNPLYSTTSLAGIIPSDGALASVLNTFEIFSIWSFVLLAIGLHKTGGISKKAGWISAIILFGILVVFSLFSGLINSVAGA.

Helical transmembrane passes span 38–58, 93–113, 128–148, 171–191, and 205–225; these read VWGP…LQSL, GAII…WLCV, LSLF…IVAF, LASV…LLAI, and WISA…SGLI.

As to quaternary structure, interacts with a complex composed of YknX, YknY and YknZ.

It is found in the cell membrane. Functionally, part of an unusual four-component transporter, which is required for protection against the killing factor SdpC (sporulation-delaying protein). Has a role in the assembly of the YknXYZ complex. This chain is Membrane protein YknW (yknW), found in Bacillus subtilis (strain 168).